The chain runs to 144 residues: Small ribosomal subunit protein bS6 (144 aa).

Residues 97 to 144 (DTEQSLIMKSKDEKGDKPERSERRRRDDEEGDAAPAATDTDGDNAEAA) are disordered. Positions 105-124 (KSKDEKGDKPERSERRRRDD) are enriched in basic and acidic residues.

Belongs to the bacterial ribosomal protein bS6 family.

Binds together with bS18 to 16S ribosomal RNA. This chain is Small ribosomal subunit protein bS6, found in Xanthomonas campestris pv. campestris (strain 8004).